A 204-amino-acid chain; its full sequence is Small ribosomal subunit protein uS4 (204 aa).

The S4 RNA-binding domain occupies serine 93–glutamate 156.

Belongs to the universal ribosomal protein uS4 family. In terms of assembly, part of the 30S ribosomal subunit. Contacts protein S5. The interaction surface between S4 and S5 is involved in control of translational fidelity.

In terms of biological role, one of the primary rRNA binding proteins, it binds directly to 16S rRNA where it nucleates assembly of the body of the 30S subunit. Functionally, with S5 and S12 plays an important role in translational accuracy. This is Small ribosomal subunit protein uS4 from Wolbachia pipientis subsp. Culex pipiens (strain wPip).